Reading from the N-terminus, the 93-residue chain is Large ribosomal subunit protein uL23 (93 aa).

Belongs to the universal ribosomal protein uL23 family. Part of the 50S ribosomal subunit. Contacts protein L29, and trigger factor when it is bound to the ribosome.

In terms of biological role, one of the early assembly proteins it binds 23S rRNA. One of the proteins that surrounds the polypeptide exit tunnel on the outside of the ribosome. Forms the main docking site for trigger factor binding to the ribosome. The protein is Large ribosomal subunit protein uL23 of Wolinella succinogenes (strain ATCC 29543 / DSM 1740 / CCUG 13145 / JCM 31913 / LMG 7466 / NCTC 11488 / FDC 602W) (Vibrio succinogenes).